Consider the following 314-residue polypeptide: Olfactory receptor 5D13 (314 aa).

At 1-27 the chain is on the extracellular side; that stretch reads MMASERNQSSTPTFILLGFSEYPEIQV. N-linked (GlcNAc...) asparagine glycosylation occurs at Asn7. Residues 28–48 form a helical membrane-spanning segment; the sequence is PLFLVFLFVYTVTVVGNLGMI. The Cytoplasmic portion of the chain corresponds to 49 to 56; the sequence is IIIRLNSK. A helical transmembrane segment spans residues 57–77; the sequence is LHTIMCFFLSHLSLTDFCFST. Residues 78 to 101 are Extracellular-facing; sequence VVTPKLLENLVVEYRTISFSGCIM. A helical membrane pass occupies residues 102-122; sequence QFCFACIFGVTETFMLAAMAY. Over 123-141 the chain is Cytoplasmic; that stretch reads DRFVAVCKPLLYTTIMSQK. Residues 142 to 162 form a helical membrane-spanning segment; sequence LCALLVAGSYTWGIVCSLILT. The Extracellular segment spans residues 163 to 198; it reads YFLLDLSFCESTFINNFICDHSVIVSASYSDPYISQ. A helical transmembrane segment spans residues 199-219; the sequence is RLCFIIAIFNEVSSLIIILTS. Over 220 to 239 the chain is Cytoplasmic; it reads YMLIFTTIMKMRSASGRQKT. A helical transmembrane segment spans residues 240–260; sequence FSTCASHLTAITIFHGTILFL. Residues 261–273 are Extracellular-facing; the sequence is YCVPNPKTSSLIV. The chain crosses the membrane as a helical span at residues 274-294; that stretch reads TVASVFYTVAIPMLNPLIYSL. At 295–314 the chain is on the cytoplasmic side; that stretch reads RNKDINNMFEKLVVTKLIYH.

This sequence belongs to the G-protein coupled receptor 1 family.

The protein localises to the cell membrane. In terms of biological role, odorant receptor. In Homo sapiens (Human), this protein is Olfactory receptor 5D13 (OR5D13).